The sequence spans 382 residues: Type 2 DNA topoisomerase 6 subunit A (382 aa).

The region spanning 14–155 (YDPQKVLKKL…MHITADRRGY (142 aa)) is the Topo IIA-type catalytic domain. The active-site O-(5'-phospho-DNA)-tyrosine intermediate is Y108. Residues E202 and D254 each coordinate Mg(2+).

It belongs to the TOP6A family. As to quaternary structure, homodimer. Heterotetramer of two Top6A and two Top6B chains. Mg(2+) serves as cofactor.

The enzyme catalyses ATP-dependent breakage, passage and rejoining of double-stranded DNA.. In terms of biological role, relaxes both positive and negative superturns and exhibits a strong decatenase activity. The sequence is that of Type 2 DNA topoisomerase 6 subunit A from Pyrococcus horikoshii (strain ATCC 700860 / DSM 12428 / JCM 9974 / NBRC 100139 / OT-3).